The following is a 115-amino-acid chain: Large ribosomal subunit protein bL20 (115 aa).

This sequence belongs to the bacterial ribosomal protein bL20 family.

In terms of biological role, binds directly to 23S ribosomal RNA and is necessary for the in vitro assembly process of the 50S ribosomal subunit. It is not involved in the protein synthesizing functions of that subunit. This Borrelia garinii subsp. bavariensis (strain ATCC BAA-2496 / DSM 23469 / PBi) (Borreliella bavariensis) protein is Large ribosomal subunit protein bL20.